The sequence spans 448 residues: Phosphoglucosamine mutase (448 aa).

Catalysis depends on Ser-104, which acts as the Phosphoserine intermediate. Residues Ser-104, Asp-241, Asp-243, and Asp-245 each coordinate Mg(2+). Position 104 is a phosphoserine (Ser-104).

This sequence belongs to the phosphohexose mutase family. Mg(2+) is required as a cofactor. Activated by phosphorylation.

The catalysed reaction is alpha-D-glucosamine 1-phosphate = D-glucosamine 6-phosphate. Functionally, catalyzes the conversion of glucosamine-6-phosphate to glucosamine-1-phosphate. In Nocardioides sp. (strain ATCC BAA-499 / JS614), this protein is Phosphoglucosamine mutase.